A 223-amino-acid chain; its full sequence is UPF0173 metal-dependent hydrolase TV0864 (223 aa).

It belongs to the UPF0173 family.

The protein is UPF0173 metal-dependent hydrolase TV0864 of Thermoplasma volcanium (strain ATCC 51530 / DSM 4299 / JCM 9571 / NBRC 15438 / GSS1).